The following is a 713-amino-acid chain: Low-density lipoprotein receptor-related protein 10 (713 aa).

Positions 1 to 16 are cleaved as a signal peptide; sequence MLLATLLLLLLGGALA. The Extracellular portion of the chain corresponds to 17–440; that stretch reads HPDRIIFPNH…WDCSYVLPRK (424 aa). 2 disulfides stabilise this stretch: C28-C57 and C80-C98. Positions 28–136 constitute a CUB 1 domain; the sequence is CEDPPAVLLE…QGFLLSYSQD (109 aa). N-linked (GlcNAc...) asparagine glycosylation occurs at N56. Residue N111 is glycosylated (N-linked (GlcNAc...) asparagine). The LDL-receptor class A 1 domain occupies 139–175; it reads MCLQEEFQCLNHRCVSAVQRCDGVDACGDGSDEAGCS. Intrachain disulfides connect C140–C152, C147–C165, C159–C174, and C192–C220. Residues 192 to 305 form the CUB 2 domain; sequence CNVTLEDFYG…RGFNATYHVR (114 aa). 2 N-linked (GlcNAc...) asparagine glycosylation sites follow: N193 and N299. LDL-receptor class A domains lie at 307–354, 355–397, and 398–434; these read YCLP…EDCP, GCPP…RRCR, and HCQP…WDCS. Intrachain disulfides connect C308–C331, C315–C344, C338–C353, C356–C374, C363–C387, C381–C396, C399–C411, C406–C424, and C418–C433. A helical transmembrane segment spans residues 441 to 461; that stretch reads VITAAVIGSLVCGLLLVIALG. Over 462–713 the chain is Cytoplasmic; the sequence is CTCKLYAIRT…AEAEDEPLLT (252 aa). The disordered stretch occupies residues 564-637; the sequence is GLLPRTNTPA…SPAPTTVPEA (74 aa). Positions 569 to 584 are enriched in polar residues; that stretch reads TNTPARASEARSQVTP. Phosphothreonine is present on T596. Residues 621 to 636 are compositionally biased toward low complexity; it reads PLPSASTSPAPTTVPE.

Belongs to the LDLR family. As to expression, expressed in blood leukocyte, lung, placenta, small intestine, liver, kidney, spleen, thymus, colon, skeletal muscle and heart.

The protein localises to the membrane. It is found in the coated pit. Functionally, probable receptor, which is involved in the internalization of lipophilic molecules and/or signal transduction. May be involved in the uptake of lipoprotein APOE in liver. This Homo sapiens (Human) protein is Low-density lipoprotein receptor-related protein 10 (LRP10).